Consider the following 61-residue polypeptide: Protein stunted (61 aa).

Residues 3-15 are sufficient for mth activation; it reads AWRAAGITYIQYS.

This sequence belongs to the eukaryotic ATPase epsilon family.

Its function is as follows. Activates the G-protein coupled receptor mth in vitro, leading to increased intracellular calcium ion levels. This chain is Protein stunted, found in Drosophila melanogaster (Fruit fly).